The sequence spans 531 residues: CTP synthase (531 aa).

The interval 1–267 (MTKYIIITGG…ASKILSKLNL (267 aa)) is amidoligase domain. Position 13 (Ser13) interacts with CTP. Ser13 lines the UTP pocket. Residue 14 to 19 (SVGKGT) coordinates ATP. Tyr54 contacts L-glutamine. Asp71 serves as a coordination point for ATP. Residues Asp71 and Glu141 each contribute to the Mg(2+) site. CTP contacts are provided by residues 148–150 (DIE), 188–193 (KTKPLQ), and Lys224. Residues 188–193 (KTKPLQ) and Lys224 each bind UTP. The Glutamine amidotransferase type-1 domain occupies 292-531 (KIALVGKYTK…IGFLRAAAGV (240 aa)). Gly355 contacts L-glutamine. Cys382 functions as the Nucleophile; for glutamine hydrolysis in the catalytic mechanism. L-glutamine contacts are provided by residues 383 to 386 (YGMQ), Glu406, and Arg463. Residues His507 and Glu509 contribute to the active site.

This sequence belongs to the CTP synthase family. As to quaternary structure, homotetramer.

The catalysed reaction is UTP + L-glutamine + ATP + H2O = CTP + L-glutamate + ADP + phosphate + 2 H(+). It catalyses the reaction L-glutamine + H2O = L-glutamate + NH4(+). It carries out the reaction UTP + NH4(+) + ATP = CTP + ADP + phosphate + 2 H(+). It functions in the pathway pyrimidine metabolism; CTP biosynthesis via de novo pathway; CTP from UDP: step 2/2. Allosterically activated by GTP, when glutamine is the substrate; GTP has no effect on the reaction when ammonia is the substrate. The allosteric effector GTP functions by stabilizing the protein conformation that binds the tetrahedral intermediate(s) formed during glutamine hydrolysis. Inhibited by the product CTP, via allosteric rather than competitive inhibition. Functionally, catalyzes the ATP-dependent amination of UTP to CTP with either L-glutamine or ammonia as the source of nitrogen. Regulates intracellular CTP levels through interactions with the four ribonucleotide triphosphates. In Sulfurisphaera tokodaii (strain DSM 16993 / JCM 10545 / NBRC 100140 / 7) (Sulfolobus tokodaii), this protein is CTP synthase.